The chain runs to 364 residues: 3-isopropylmalate dehydrogenase (364 aa).

An NAD(+)-binding site is contributed by 79-92 (GSKWDHLPEIEKPE). Substrate contacts are provided by arginine 100, arginine 110, arginine 139, and aspartate 227. Mg(2+) contacts are provided by aspartate 227, aspartate 251, and aspartate 255. An NAD(+)-binding site is contributed by 285-297 (GSAPNIAGKTIAN).

This sequence belongs to the isocitrate and isopropylmalate dehydrogenases family. LeuB type 1 subfamily. As to quaternary structure, homodimer. Mg(2+) serves as cofactor. It depends on Mn(2+) as a cofactor.

It localises to the cytoplasm. It carries out the reaction (2R,3S)-3-isopropylmalate + NAD(+) = 4-methyl-2-oxopentanoate + CO2 + NADH. The protein operates within amino-acid biosynthesis; L-leucine biosynthesis; L-leucine from 3-methyl-2-oxobutanoate: step 3/4. Its function is as follows. Catalyzes the oxidation of 3-carboxy-2-hydroxy-4-methylpentanoate (3-isopropylmalate) to 3-carboxy-4-methyl-2-oxopentanoate. The product decarboxylates to 4-methyl-2 oxopentanoate. This chain is 3-isopropylmalate dehydrogenase, found in Buchnera aphidicola subsp. Thelaxes suberi.